Here is a 398-residue protein sequence, read N- to C-terminus: Selection and upkeep of intraepithelial T-cells protein 8 (398 aa).

The first 25 residues, 1–25, serve as a signal peptide directing secretion; the sequence is MMKPEFSHFFGFCVYFLFLQVMASS. Residues 26–141 enclose the Ig-like V-type domain; the sequence is EKLRVTTPTR…DVAIMNLNVT (116 aa). Residues 26-244 lie on the Extracellular side of the membrane; that stretch reads EKLRVTTPTR…ANELFNQDYL (219 aa). C49 and C123 are joined by a disulfide. Residues N92 and N139 are each glycosylated (N-linked (GlcNAc...) asparagine). The region spanning 142–233 is the Ig-like C1-type domain; that stretch reads AVGLETEIHV…TGEEKQTSII (92 aa). C163 and C217 are disulfide-bonded. A helical transmembrane segment spans residues 245 to 265; that stretch reads WVGIFPFSVLSLILFGVLPFI. The Cytoplasmic portion of the chain corresponds to 266 to 288; that stretch reads NSFFRSQGCASGCLSKCLPVVTS. Residues 289–309 traverse the membrane as a helical segment; sequence WPVQIVHFLVCSGVLFAVYLP. Residues 310–331 are Extracellular-facing; it reads HRYRVSLSDPQFPLYNNWITEL. A helical membrane pass occupies residues 332–352; sequence LIVILFLTICFVLPITVLLLI. The Cytoplasmic portion of the chain corresponds to 353–398; that stretch reads KLSPTCLAKWEKNKDDIMDSQLGLGKAREASTLYEEQSRKSWEQEK.

Belongs to the SKINT family. Expressed in skin, thymus, testis and, to a lower extent, bladder, brain, heart, kidney, mammary gland, small intestine and uterus.

The protein localises to the membrane. Its function is as follows. May act by engaging a cell surface molecule on immature T-cells in the embryonic thymus. The protein is Selection and upkeep of intraepithelial T-cells protein 8 (Skint8) of Mus musculus (Mouse).